The chain runs to 413 residues: Serine/threonine-protein phosphatase 2A 55 kDa regulatory subunit B beta isoform (413 aa).

WD repeat units lie at residues 1–31, 57–98, 141–179, and 190–230; these read EFNH…KNQV, EIEE…KRPE, AHTY…QSFN, and ELTE…LCDR. Ser245 is subject to Phosphoserine. WD repeat units lie at residues 249–287, 304–345, and 380–412; these read EIIS…RPIE, ENDC…DVTL, and DFSK…QDKV. A Phosphotyrosine modification is found at Tyr265. Thr268 carries the post-translational modification Phosphothreonine.

This sequence belongs to the phosphatase 2A regulatory subunit B family. As to quaternary structure, PP2A consists of a common heterodimeric core enzyme, composed of a 36 kDa catalytic subunit (subunit C) and a 65 kDa constant regulatory subunit (PR65 or subunit A), that associates with a variety of regulatory subunits. Proteins that associate with the core dimer include three families of regulatory subunits B (the R2/B/PR55/B55, R3/B''/PR72/PR130/PR59 and R5/B'/B56 families), the 48 kDa variable regulatory subunit, viral proteins, and cell signaling molecules. Interacts with TOMM22. Interacts with IER5 (via N- and C-terminal regions). As to expression, brain.

The protein resides in the cytoplasm. The protein localises to the cytoskeleton. Its subcellular location is the membrane. Functionally, the B regulatory subunit might modulate substrate selectivity and catalytic activity, and might also direct the localization of the catalytic enzyme to a particular subcellular compartment. In Oryctolagus cuniculus (Rabbit), this protein is Serine/threonine-protein phosphatase 2A 55 kDa regulatory subunit B beta isoform (PPP2R2B).